Reading from the N-terminus, the 166-residue chain is uncharacterized protein (166 aa).

4Fe-4S ferredoxin-type domains lie at 3–33 (MKKI…GRIA), 37–67 (KDGK…EHKD), and 68–97 (GYVY…MEDK). The [4Fe-4S] cluster site is built by Cys13, Cys16, Cys19, Cys23, Cys46, Cys49, Cys54, Cys58, Cys77, Cys80, Cys83, Cys87, Cys101, Cys104, Cys111, and Cys115.

It depends on [4Fe-4S] cluster as a cofactor.

This is an uncharacterized protein from Methanocaldococcus jannaschii (strain ATCC 43067 / DSM 2661 / JAL-1 / JCM 10045 / NBRC 100440) (Methanococcus jannaschii).